The sequence spans 781 residues: Molybdenum cofactor sulfurase (781 aa).

At Lys246 the chain carries N6-(pyridoxal phosphate)lysine. Cys413 is an active-site residue. The MOSC domain occupies 635-781 (LRLLRQSGQR…MTCGDVVLVE (147 aa)). At Ser734 the chain carries Phosphoserine.

The protein belongs to the class-V pyridoxal-phosphate-dependent aminotransferase family. MOCOS subfamily. The cofactor is pyridoxal 5'-phosphate.

The catalysed reaction is Mo-molybdopterin + L-cysteine + AH2 = thio-Mo-molybdopterin + L-alanine + A + H2O. It participates in cofactor biosynthesis; molybdopterin biosynthesis. Sulfurates the molybdenum cofactor. Sulfation of molybdenum is essential for xanthine dehydrogenase (XDH) and aldehyde oxidase (ADO) enzymes in which molybdenum cofactor is liganded by 1 oxygen and 1 sulfur atom in active form. In Drosophila melanogaster (Fruit fly), this protein is Molybdenum cofactor sulfurase.